The chain runs to 393 residues: NAD(P)H-quinone oxidoreductase subunit H 1 (393 aa).

The protein belongs to the complex I 49 kDa subunit family. As to quaternary structure, NDH-1 can be composed of about 15 different subunits; different subcomplexes with different compositions have been identified which probably have different functions.

The protein localises to the cell inner membrane. It carries out the reaction a plastoquinone + NADH + (n+1) H(+)(in) = a plastoquinol + NAD(+) + n H(+)(out). It catalyses the reaction a plastoquinone + NADPH + (n+1) H(+)(in) = a plastoquinol + NADP(+) + n H(+)(out). Its function is as follows. NDH-1 shuttles electrons from an unknown electron donor, via FMN and iron-sulfur (Fe-S) centers, to quinones in the respiratory and/or the photosynthetic chain. The immediate electron acceptor for the enzyme in this species is believed to be plastoquinone. Couples the redox reaction to proton translocation, and thus conserves the redox energy in a proton gradient. Cyanobacterial NDH-1 also plays a role in inorganic carbon-concentration. This chain is NAD(P)H-quinone oxidoreductase subunit H 1, found in Gloeobacter violaceus (strain ATCC 29082 / PCC 7421).